Reading from the N-terminus, the 232-residue chain is Small ribosomal subunit protein uS3 (232 aa).

Residues 39-107 form the KH type-2 domain; that stretch reads VRQFLTKELA…PAQINIAEVR (69 aa).

This sequence belongs to the universal ribosomal protein uS3 family. In terms of assembly, part of the 30S ribosomal subunit. Forms a tight complex with proteins S10 and S14.

Functionally, binds the lower part of the 30S subunit head. Binds mRNA in the 70S ribosome, positioning it for translation. The polypeptide is Small ribosomal subunit protein uS3 (Yersinia pestis bv. Antiqua (strain Antiqua)).